A 255-amino-acid chain; its full sequence is DNA repair protein RecO (255 aa).

Belongs to the RecO family.

Involved in DNA repair and RecF pathway recombination. This is DNA repair protein RecO from Listeria welshimeri serovar 6b (strain ATCC 35897 / DSM 20650 / CCUG 15529 / CIP 8149 / NCTC 11857 / SLCC 5334 / V8).